The primary structure comprises 564 residues: Agglutinin (564 aa).

The signal sequence occupies residues 1-24 (MYAVATWLCFGSTSGWSFTLEDNN). 32 to 34 (IIN) provides a ligand contact to beta-D-galactose. The N-linked (GlcNAc...) asparagine glycan is linked to asparagine 34. Catalysis depends on residues tyrosine 104, tyrosine 147, glutamate 200, and arginine 203. Residues 104 to 105 (YV) and 145 to 147 (GNY) each bind AMP. Asparagine 259 carries N-linked (GlcNAc...) asparagine glycosylation. An intrachain disulfide couples cysteine 282 to cysteine 306. A propeptide spans 291 to 302 (SLLIRPVVPNFN) (linker peptide). Residues 309 to 436 (PEPIVRIVGR…YAVSQGWLPT (128 aa)) form the Ricin B-type lectin 1 domain. Beta-D-galactose-binding positions include isoleucine 312, 324 to 328 (DVTGE), glutamine 337, lysine 342, and asparagine 348. A 1-alpha repeat occupies 319-361 (NGLCVDVTGEEFFDGNPIQLWPCKSNTDWNQLWTLRKDSTIRS). Cysteine 322 and cysteine 341 form a disulfide bridge. Residues 362 to 402 (NGKCLTISKSSPRQQVVIYNCSTATVGATRWQIWDNRTIIN) form a 1-beta repeat. A disulfide bridge connects residues cysteine 365 and cysteine 382. N-linked (GlcNAc...) asparagine glycosylation is found at asparagine 397 and asparagine 437. The stretch at 405-437 (SGLVLAATSGNSGTKLTVQTNIYAVSQGWLPTN) is one 1-gamma repeat. Asparagine 437 is a binding site for beta-D-galactose. The Ricin B-type lectin 2 domain maps to 439-563 (TQPFVTTIVG…GNLNQIWLPL (125 aa)). One copy of the 2-alpha repeat lies at 450-485 (YGMCLQANSGKVWLEDCTSEKAEQQWALYADGSIRP). 2 cysteine pairs are disulfide-bonded: cysteine 453–cysteine 466 and cysteine 492–cysteine 509. Residues 489–528 (RDNCLTTDANIKGTVVKILSCGPASSGQRWMFKNDGTILN) form a 2-beta repeat. One copy of the 2-gamma repeat lies at 531–558 (NGLVLDVRRSDPSLKQIIVHPFHGNLNQ).

It in the N-terminal section; belongs to the ribosome-inactivating protein family. Type 2 RIP subfamily.

It catalyses the reaction Endohydrolysis of the N-glycosidic bond at one specific adenosine on the 28S rRNA.. This Ricinus communis (Castor bean) protein is Agglutinin.